Consider the following 217-residue polypeptide: Probable transaldolase (217 aa).

The Schiff-base intermediate with substrate role is filled by Lys83.

Belongs to the transaldolase family. Type 3B subfamily.

Its subcellular location is the cytoplasm. It catalyses the reaction D-sedoheptulose 7-phosphate + D-glyceraldehyde 3-phosphate = D-erythrose 4-phosphate + beta-D-fructose 6-phosphate. It participates in carbohydrate degradation; pentose phosphate pathway; D-glyceraldehyde 3-phosphate and beta-D-fructose 6-phosphate from D-ribose 5-phosphate and D-xylulose 5-phosphate (non-oxidative stage): step 2/3. Functionally, transaldolase is important for the balance of metabolites in the pentose-phosphate pathway. This chain is Probable transaldolase, found in Anaeromyxobacter dehalogenans (strain 2CP-C).